The primary structure comprises 596 residues: MATSSIRSRALGLSRRARFETTRLPFIGRRYKSDETLNRISSKITQPKSQGASQAMLYATGLTEEDMSKAQVGISSVWFEGNPCNMHLNDLSGIVRDSVLRAGLVPMRFNSVGVSDGISMGTAGMRYSLQSRELIADGIETVMNAQWYDANISLPGCDKNMPGVLMAMGRTNRPSIMVYGGSIKPGCSAKGQKLDLVSAFQSYGQFITGQIDETERFDIIRNACPGKGACGGMYTANTLATAIETMGMTVPGSSSCPADDPKKLVECENIGEVVKNMLREEIKPRDVMTRQAFENAMIVVNVLGGSTNAVLHLIAIADSVGIKLTIDDFQAVSDKTPFLADLKPSGKYLMNDLYSIGGTPALLKYLLKEGLIDGSGITVTGKTMKENVASWPDFPADQDIIQPLSNPIKPSGHLQILRGSLAPGGSVGKITGKEGLRFEGTAKCYDYEDAFIESLERGEIKKGEKTVVIIRYEGPKGGPGMPEMLKPSAAIMGAGLGQDVALLTDGRFSGGSHGFLIGHIVPEAMEGGPIALARDGDRIVIDAEEKVVDLDVPTEELDARRKQWKAPPLRYQKGTLKKYCALVSDASHGCVTDGPI.

The transit peptide at 1–18 (MATSSIRSRALGLSRRAR) directs the protein to the mitochondrion. Residue Cys-84 coordinates [2Fe-2S] cluster. A Mg(2+)-binding site is contributed by Asp-116. Cys-157 is a binding site for [2Fe-2S] cluster. Position 158 (Asp-158) interacts with Mg(2+). Cys-230 lines the [2Fe-2S] cluster pocket. Glu-483 is a Mg(2+) binding site. Residue Ser-509 is the Proton acceptor of the active site.

Belongs to the IlvD/Edd family. Requires [2Fe-2S] cluster as cofactor. The cofactor is Mg(2+).

It is found in the mitochondrion. It catalyses the reaction (2R)-2,3-dihydroxy-3-methylbutanoate = 3-methyl-2-oxobutanoate + H2O. It carries out the reaction (2R,3R)-2,3-dihydroxy-3-methylpentanoate = (S)-3-methyl-2-oxopentanoate + H2O. It participates in amino-acid biosynthesis; L-isoleucine biosynthesis; L-isoleucine from 2-oxobutanoate: step 3/4. Its pathway is amino-acid biosynthesis; L-valine biosynthesis; L-valine from pyruvate: step 3/4. Its activity is regulated as follows. DHAD activity is not inhibited by the dihydroxyacid dehydratase inhibitor aspterric acid (AA). Dihydroxyacid dehydratase; part of the gene cluster that mediates the biosynthesis of the sesquiterpenoid aspterric acid (AA), an inhibitor of dihydroxy-acid dehydratase (DHAD) effective as an herbicide. Performs the third step in the common pathway leading to biosynthesis of branched-chain amino acids. Catalyzes the dehydration of (2R,3R)-2,3-dihydroxy-3-methylpentanoate (2,3-dihydroxy-3-methylvalerate) into 2-oxo-3-methylpentanoate (2-oxo-3-methylvalerate) and of (2R)-2,3-dihydroxy-3-methylbutanoate (2,3-dihydroxyisovalerate) into 2-oxo-3-methylbutanoate (2-oxoisovalerate), the penultimate precursor to L-isoleucine and L-valine, respectively. PbrD confers self-resistance in the presence of the dihydroxyacid dehydratase inhibitor aspterric acid (AA) produced by the ast cluster. This Penicillium brasilianum protein is Dihydroxy-acid dehydratase pbrD, mitochondrial.